We begin with the raw amino-acid sequence, 146 residues long: Hemoglobin subunit beta (146 aa).

Valine 1 carries the N-acetylvaline modification. Residues 2–146 (QLSGEEKAAV…VANALAHKYH (145 aa)) enclose the Globin domain. Phosphoserine is present on serine 44. Lysine 59 is subject to N6-acetyllysine. Position 63 (histidine 63) interacts with heme b. Lysine 82 carries the post-translational modification N6-acetyllysine. Histidine 92 serves as a coordination point for heme b. An S-nitrosocysteine modification is found at cysteine 93. The residue at position 144 (lysine 144) is an N6-acetyllysine.

It belongs to the globin family. As to quaternary structure, heterotetramer of two alpha chains and two beta chains. In terms of tissue distribution, red blood cells.

Involved in oxygen transport from the lung to the various peripheral tissues. The polypeptide is Hemoglobin subunit beta (HBB) (Equus hemionus kulan (Turkmenian kulan)).